The primary structure comprises 105 residues: ATP-dependent Clp protease adapter protein ClpS (105 aa).

This sequence belongs to the ClpS family. In terms of assembly, binds to the N-terminal domain of the chaperone ClpA.

Its function is as follows. Involved in the modulation of the specificity of the ClpAP-mediated ATP-dependent protein degradation. This chain is ATP-dependent Clp protease adapter protein ClpS, found in Aeromonas salmonicida (strain A449).